Consider the following 606-residue polypeptide: Chaperone protein DnaK (606 aa).

T174 carries the post-translational modification Phosphothreonine; by autocatalysis. Residues 579–593 (ASAAGNPGQGQTNEN) are compositionally biased toward polar residues. A disordered region spans residues 579–606 (ASAAGNPGQGQTNENPGGKTIDGDYKVN).

It belongs to the heat shock protein 70 family.

In terms of biological role, acts as a chaperone. The protein is Chaperone protein DnaK of Dictyoglomus thermophilum (strain ATCC 35947 / DSM 3960 / H-6-12).